Reading from the N-terminus, the 448-residue chain is Beclin-1 (448 aa).

M1 is subject to N-acetylmethionine. Phosphoserine is present on residues S14 and S29. Residues 47 to 72 (TTAQAKPGESQEEEANSGEEPFIETR) are disordered. S88, S91, and S94 each carry phosphoserine; by AMPK. The BH3 signature appears at 106-125 (TMENLSRRLKVTGDLFDIMS). An interaction with BCL2 and BCL2L1 isoform Bcl-X(L) region spans residues 110 to 157 (LSRRLKVTGDLFDIMSGQTDVDHPLCEECTDTLLDQLDTQLNVTENEC). The residue at position 117 (T117) is a Phosphothreonine; by DAPK1. A coiled-coil region spans residues 140–267 (DTLLDQLDTQ…QLDKLKKTNV (128 aa)). An evolutionary conserved domain (ECD) region spans residues 243–448 (DELKSVENQM…AWVSSQFYNK (206 aa)). Residues K400 and K435 each participate in a glycyl lysine isopeptide (Lys-Gly) (interchain with G-Cter in ubiquitin) cross-link. Residues 423 to 448 (WTKALKFMLTNLKWGLAWVSSQFYNK) form a required for membrane-association region.

This sequence belongs to the beclin family. As to quaternary structure, a homodimeric form is proposed to exist; this metastable form readily transits to ATG14- or UVRAG-containing complexes with BECN1:UVRAG being more stable than BECN1:ATG14. Component of the PI3K (PI3KC3/PI3K-III/class III phosphatidylinositol 3-kinase) complex the core of which is composed of the catalytic subunit PIK3C3, the regulatory subunit PIK3R4 and BECN1 associating with additional regulatory/auxiliary subunits to form alternative complex forms. Alternative complex forms containing a fourth regulatory subunit in a mutually exclusive manner are PI3K complex I (PI3KC3-C1) containing ATG14, and PI3K complex II (PI3KC3-C2) containing UVRAG. PI3KC3-C1 displays a V-shaped architecture with PIK3R4 serving as a bridge between PIK3C3 and the ATG14:BECN1 subcomplex. Both, PI3KC3-C1 and PI3KC3-C2, can associate with further regulatory subunits, such as RUBCN, SH3GLB1/Bif-1 and AMBRA1. PI3KC3-C1 probably associates with PIK3CB. Forms a complex with PPP2CA and AMBRA1; AMBRA1 and BECN1 components of the complex regulate MYC stability via different pathways. Component of the complex, at least composed of LRPPRC, BECN1 and BCL2; the interactions prevent BECN1 from forming an autophagy-inducing complex with PIK3C3. Interacts with AMBRA1, GOPC, GRID2. Interacts with BCL2 and BCL2L1 isoform Bcl-X(L); the interaction inhibits BECN1 function in promoting autophagy by interfering with the formation of the PI3K complex. Interacts with cytosolic HMGB1; inhibits the interaction of BECN1 and BCL2 leading to promotion of autophagy. Interacts with USP10, USP13, DAPK1, RAB39A. Interacts with SLAMF1. Interacts with the poly-Gln domain of ATXN3; the interaction causes deubiquitination at Lys-400 and stabilizes BECN1. Interacts with VMP1. Interacts with TRIM5; the interaction causes activation of BECN1 by causing its dissociation from its inhibitors BCL2 and TAB2. Interacts with active ULK1 (phosphorylated on 'Ser-317') and MEFV simultaneously. Interacts with WDR81 and WDR91; negatively regulates the PI3 kinase/PI3K activity associated with endosomal membranes. Interacts with LAPTM4B; competes with EGFR for LAPTM4B binding; regulates EGFR activity. Interacts with TRIM50. Interacts with TRIM16. Interacts with ATG14; this interaction is increased in the absence of TMEM39A. Interacts with WASHC1; preventing interaction with AMBRA1 and the DCX(AMBRA1) complex and subsequent ubiquitination. Interacts with TRIM17. Interacts with BCL2L10/BCL-B (via BH1 domain). Interacts with SH3BGRL. Interacts with IRGM; enhancing BECN1-interacting partners and influencing the composition of the BECN1 complex. Interacts with ARMC3. Interacts with LRPPRC. Phosphorylation at Thr-117 by DAPK1 reduces its interaction with BCL2 and BCL2L1 and promotes induction of autophagy. In response to autophagic stimuli, phosphorylated at serine residues by AMPK in an ATG14-dependent manner, and this phosphorylation is critical for maximally efficient autophagy. Post-translationally, polyubiquitinated by NEDD4, both with 'Lys-11'- and 'Lys-63'-linkages. 'Lys-11'-linked polyubiquitination leads to degradation and is enhanced when the stabilizing interaction partner VPS34 is depleted. Deubiquitinated by USP10 and USP13, leading to stabilize the PIK3C3/VPS34-containing complexes. Polyubiquitinated at Lys-400 with 'Lys-48'-linkages. 'Lys-48'-linked polyubiquitination of Lys-400 leads to degradation. Deubiquitinated by ATXN3, leading to stabilization. Ubiquitinated at Lys-435 via 'Lys-63'-linkage by the DCX(AMBRA1) complex, thereby increasing the association between BECN1 and PIK3C3 to promote PIK3C3 activity. 'Lys-48'-linked ubiquitination by RNF216 leads to proteasomal degradation and autophagy inhibition. In terms of processing, proteolytically processed by caspases including CASP8 and CASP3; the C-terminal fragments lack autophagy-inducing capacity and are proposed to induce apoptosis. Thus the cleavage is proposed to be an determinant to switch from autophagy to apoptosis pathways affecting cellular homeostasis including viral infections and survival of tumor cells.

The protein localises to the cytoplasm. Its subcellular location is the golgi apparatus. It is found in the trans-Golgi network membrane. The protein resides in the endosome membrane. It localises to the endoplasmic reticulum membrane. The protein localises to the mitochondrion membrane. Its subcellular location is the cytoplasmic vesicle. It is found in the autophagosome. The protein resides in the mitochondrion. It localises to the nucleus. In terms of biological role, plays a central role in autophagy. Acts as a core subunit of the PI3K complex that mediates formation of phosphatidylinositol 3-phosphate; different complex forms are believed to play a role in multiple membrane trafficking pathways: PI3KC3-C1 is involved in initiation of autophagosomes and PI3KC3-C2 in maturation of autophagosomes and endocytosis. Involved in regulation of degradative endocytic trafficking and required for the abscission step in cytokinesis, probably in the context of PI3KC3-C2. Essential for the formation of PI3KC3-C2 but not PI3KC3-C1 PI3K complex forms. Involved in endocytosis. May play a role in antiviral host defense. Functionally, beclin-1-C 35 kDa localized to mitochondria can promote apoptosis; it induces the mitochondrial translocation of BAX and the release of proapoptotic factors. In Rattus norvegicus (Rat), this protein is Beclin-1 (Becn1).